The primary structure comprises 565 residues: Wee1-like protein kinase 2 (565 aa).

The region spanning F217–L493 is the Protein kinase domain. Residues I223–V231 and K246 each bind ATP. D344 functions as the Proton acceptor in the catalytic mechanism. Mg(2+) is bound by residues N349 and D383. Positions A496–L522 form a coiled coil. Residues P531–G553 are disordered.

It belongs to the protein kinase superfamily. Ser/Thr protein kinase family. WEE1 subfamily.

The protein resides in the nucleus. The catalysed reaction is L-tyrosyl-[protein] + ATP = O-phospho-L-tyrosyl-[protein] + ADP + H(+). In terms of biological role, oocyte-specific protein tyrosine kinase that phosphorylates and inhibits CDK1 and acts as a key regulator of meiosis. Required to maintain meiotic arrest in oocytes by phosphorylating CDK1 at 'Tyr-15', leading to inhibit CDK1 activity and prevent meiotic reentry. The sequence is that of Wee1-like protein kinase 2 (WEE2) from Gallus gallus (Chicken).